Consider the following 159-residue polypeptide: Protein phosphatase 1 regulatory subunit 17 (159 aa).

Disordered stretches follow at residues 1–79 (MSTE…HIPP) and 98–127 (RIPK…PALH). Composition is skewed to basic and acidic residues over residues 62 to 73 (SDQKKPRRKDTP) and 111 to 124 (SDME…KDTP). Phosphothreonine; by PKG/PRKG1 is present on residues Thr-72 and Thr-123.

Post-translationally, substrate for cGMP-dependent protein kinase. Phosphorylation of Thr-72 and Thr-123 is required for its phosphatase activity. Phosphorylated by PRKG1 isoform alpha. Expressed in Purkinje cells of the cerebellum, hippocampus, pons, medulla and eye.

In terms of biological role, inhibits phosphatase activities of protein phosphatase 1 (PP1) and protein phosphatase 2A (PP2A) complexes. The sequence is that of Protein phosphatase 1 regulatory subunit 17 (Ppp1r17) from Mus musculus (Mouse).